The primary structure comprises 98 residues: 10 kDa chaperonin (98 aa).

It belongs to the GroES chaperonin family. In terms of assembly, forms stable complexes with CPN60 in the presence of ATP.

The protein localises to the cytoplasm. Functionally, seems to function only as a co-chaperone, along with cpn60, and in certain cases is essential for the discharge of biologically active proteins from cpn60. The polypeptide is 10 kDa chaperonin (Brassica napus (Rape)).